The sequence spans 86 residues: MANIKSQIKRIRTNERRRLRNQSVKSSLRTAIRGFREAVDAGDKDKASELLHATSRKLDKAASKGVIHPNQAANKKSALALALNKL.

Positions 1 to 22 (MANIKSQIKRIRTNERRRLRNQ) are disordered. Residues 7-20 (QIKRIRTNERRRLR) show a composition bias toward basic residues.

Belongs to the bacterial ribosomal protein bS20 family.

Its function is as follows. Binds directly to 16S ribosomal RNA. This is Small ribosomal subunit protein bS20 from Mycolicibacterium smegmatis (strain ATCC 700084 / mc(2)155) (Mycobacterium smegmatis).